We begin with the raw amino-acid sequence, 867 residues long: Alanine--tRNA ligase (867 aa).

His558, His562, Cys660, and His664 together coordinate Zn(2+).

It belongs to the class-II aminoacyl-tRNA synthetase family. Zn(2+) serves as cofactor.

The protein resides in the cytoplasm. It carries out the reaction tRNA(Ala) + L-alanine + ATP = L-alanyl-tRNA(Ala) + AMP + diphosphate. Catalyzes the attachment of alanine to tRNA(Ala) in a two-step reaction: alanine is first activated by ATP to form Ala-AMP and then transferred to the acceptor end of tRNA(Ala). Also edits incorrectly charged Ser-tRNA(Ala) and Gly-tRNA(Ala) via its editing domain. This chain is Alanine--tRNA ligase, found in Fervidobacterium nodosum (strain ATCC 35602 / DSM 5306 / Rt17-B1).